We begin with the raw amino-acid sequence, 841 residues long: Putative helicase R592 (841 aa).

One can recognise a Helicase ATP-binding domain in the interval 72–309; sequence STFVIETNSA…RRYVNKIFGQ (238 aa). 85–92 contacts ATP; the sequence is DKVGAGKT. Residues 195-205 are compositionally biased toward basic residues; sequence KLPVKTTKKGG. Residues 195 to 215 form a disordered region; the sequence is KLPVKTTKKGGSKTQNKAQND. A compositionally biased stretch (polar residues) spans 206-215; the sequence is SKTQNKAQND. Residues 266–269 carry the DEAD box motif; the sequence is DEMD. A coiled-coil region spans residues 413–450; the sequence is QDVDAHENRKKNIMNNIARCKTKLESIKEKINSIKDEC. The RING-type; degenerate zinc-finger motif lies at 451 to 491; that stretch reads CFICTDPFENPTIMNCCKSIFCLKCLLTTLKTVGSKCPYCR. Residues 531–682 enclose the Helicase C-terminal domain; sequence VLEQVLSYIS…WMITNPTDLN (152 aa). Positions 678–841 are disordered; that stretch reads PTDLNEEPDE…KAPVRKLIKV (164 aa). The segment covering 681 to 697 has biased composition (acidic residues); sequence LNEEPDEESDEGSDEDV. A compositionally biased stretch (basic and acidic residues) spans 698–725; the sequence is EKSKDKKSSDKKSSDKKKSEKKSSDKKS. Residues 726–749 show a composition bias toward basic residues; it reads SNKKNSKKKTYVKPKSSKKTSQKV. 2 stretches are compositionally biased toward acidic residues: residues 765–774 and 782–804; these read DSDDLDDSDD and SDSD…ESEI. 2 stretches are compositionally biased toward basic residues: residues 809–821 and 828–841; these read KSKK…KKNK and TLKK…LIKV.

The sequence is that of Putative helicase R592 from Acanthamoeba polyphaga mimivirus (APMV).